A 185-amino-acid chain; its full sequence is MKLVSIALMLLGSLAVLGADTARLDTSSQFRKKWNKWALSRGKRELQASSSYPTGLVDEKTVPTQTLGLQDKQSTSSTPQASTQSTAHIRVKRYRQSMNQGSRSTGCRFGTCTMQKLAHQIYQFTDKDKDGMAPRNKISPQGYGRRRRRSLPEVLRARTVESSQEQTHSAPASPAHQDISRVSRL.

The signal sequence occupies residues methionine 1–threonine 21. Arginine 41 carries the post-translational modification Arginine amide. A propeptide spanning residues glutamate 45 to valine 91 is cleaved from the precursor. The segment at glycine 68 to isoleucine 89 is disordered. Residues glutamine 73 to alanine 87 show a composition bias toward low complexity. Cysteine 107 and cysteine 112 are disulfide-bonded. Residues threonine 125–leucine 185 are disordered. Tyrosine 143 carries the tyrosine amide modification. A propeptide spans serine 150–leucine 185 (preproAM C-terminal fragment). Residues valine 160–alanine 170 show a composition bias toward polar residues.

The protein belongs to the adrenomedullin family. In terms of tissue distribution, expressed in adrenal glands, lung, kidney, heart, spleen, duodenum and submandibular glands.

The protein resides in the secreted. Functionally, adrenomedullin/ADM and proadrenomedullin N-20 terminal peptide/PAMP are peptide hormones that act as potent hypotensive and vasodilatator agents. Numerous actions have been reported most related to the physiologic control of fluid and electrolyte homeostasis. Its function is as follows. ADM function is mediated by the CALCRL-RAMP2 and CALCRL-RAMP3 receptor complexes with ADM showing the highest potency for the CALCRL-RAMP2 complex. This is Pro-adrenomedullin from Rattus norvegicus (Rat).